Reading from the N-terminus, the 171-residue chain is Co-chaperone protein HscB (171 aa).

The J domain maps to 2-74; that stretch reads DYFTLFGLPA…LTRAEYLLSL (73 aa).

The protein belongs to the HscB family. In terms of assembly, interacts with HscA and stimulates its ATPase activity. Interacts with IscU.

Co-chaperone involved in the maturation of iron-sulfur cluster-containing proteins. Seems to help targeting proteins to be folded toward HscA. The polypeptide is Co-chaperone protein HscB (Salmonella paratyphi A (strain AKU_12601)).